A 128-amino-acid polypeptide reads, in one-letter code: Large ribosomal subunit protein bL17 (128 aa).

This sequence belongs to the bacterial ribosomal protein bL17 family. Part of the 50S ribosomal subunit. Contacts protein L32.

This Streptococcus agalactiae serotype Ia (strain ATCC 27591 / A909 / CDC SS700) protein is Large ribosomal subunit protein bL17.